We begin with the raw amino-acid sequence, 187 residues long: Large ribosomal subunit protein bL12cx (187 aa).

A chloroplast-targeting transit peptide spans 1-54; sequence MASTTLSIATTIRSSSPLTSASTHHFLSKPTAIEFPFRLSSSSSHRAINLRPIS.

It belongs to the bacterial ribosomal protein bL12 family.

The protein resides in the plastid. It is found in the chloroplast. In Arabidopsis thaliana (Mouse-ear cress), this protein is Large ribosomal subunit protein bL12cx (RPL12C).